The following is a 373-amino-acid chain: Dimethylallyltryptophan synthase CymD (373 aa).

L-tryptophan is bound by residues D55, V56, and E64. The active-site Nucleophile is E64. Residues Q77, K146, W148, R205, and K207 each contribute to the dimethylallyl diphosphate site. R211 serves as a coordination point for L-tryptophan. Y274 is a dimethylallyl diphosphate binding site. Position 326 (Y326) interacts with L-tryptophan. Residues R337, K339, and Y341 each coordinate dimethylallyl diphosphate. One can recognise a FtsK domain in the interval 346-373 (MHDVTPPPLGVSQQHHLSGQTTARGRTE).

Its function is as follows. Dimethylallyltryptophan synthase; part of the gene cluster that mediates the biosynthesis of cyclic heptapeptides, known as cyclomarins and also of cyclic dipeptides, called cyclomarazines, which have both antimicrobial and cytotoxic effects. Catalyzes the reverse N-prenylation of monomeric L-tryptophan with dimethylallyl diphosphate (DMAPP) to form N-(1,1-dimethylallyl)-tryptophan (r-N-DMAT). The formation of r-N-DMAT appears to proceed via the deprotonation of the indole nitrogen of tryptophan, which facilitates a nucleophilic attack on the carbocation that is forming on the dimethylallyl group as the diphosphate dissociates. The N-(1,1-dimethylallyl)-tryptophan produced by CymD is combined with a range of standard and nonproteinogenic amino acid substrates to synthesize the peptides, a process that is probably catalyzed by the non-canonical nonribosomal peptide synthetase (NRPS), CymA. Other proteins in the cluster catalyze further modifications of the peptides including CymV which catalyzes the oxidation of olefinic cyclomarins and cyclomarazines to their respective epoxide derivatives. Utilizes only DMAPP as the prenyl donor and has no requirement for divalent cations. In Salinispora arenicola (strain CNS-205), this protein is Dimethylallyltryptophan synthase CymD.